A 574-amino-acid chain; its full sequence is Zinc finger and BTB domain-containing protein 3 (574 aa).

Positions 74 to 142 (CDCTVMVGST…MYAGQLTLRG (69 aa)) constitute a BTB domain. 2 disordered regions span residues 175–277 (AEAD…SSTE) and 305–346 (SLRV…APAP). Glycyl lysine isopeptide (Lys-Gly) (interchain with G-Cter in SUMO2) cross-links involve residues Lys-181 and Lys-182. Residues 187 to 212 (NSQLPSLEFLSSTSRGTQPSLASAET) are compositionally biased toward polar residues. The span at 323–334 (PPASAPTSAPAP) shows a compositional bias: low complexity. Ser-362 is subject to Phosphoserine. The segment at 364–403 (EETDVSDEQPQGPERAFPSGGAVYGAQPSQPEAFEDPGAA) is disordered. 2 C2H2-type zinc fingers span residues 472–494 (PTCK…ATVH) and 500–523 (YECR…RKAH). Positions 526–535 (DLAKRSKPDP) are enriched in basic and acidic residues. The disordered stretch occupies residues 526-574 (DLAKRSKPDPEVGPLLGVQPLPGSPTADRQSSSGGGPPKDFVLAPKTNI). Residue Lys-532 forms a Glycyl lysine isopeptide (Lys-Gly) (interchain with G-Cter in SUMO2) linkage. Position 549 is a phosphoserine (Ser-549).

It is found in the nucleus. Its function is as follows. May be involved in transcriptional regulation. This is Zinc finger and BTB domain-containing protein 3 (ZBTB3) from Homo sapiens (Human).